The following is a 566-amino-acid chain: Putative UDP-glucuronate:xylan alpha-glucuronosyltransferase 5 (566 aa).

Residues 17–37 (LILISLSFLGLLLNFKPLFLL) form a helical; Signal-anchor for type II membrane protein membrane-spanning segment. Positions 372 and 374 each coordinate Mn(2+). Substrate contacts are provided by residues 372–374 (DAD), 401–403 (NSG), 428–432 (NGGDQ), and 475–480 (HYLGLK). H475 contributes to the Mn(2+) binding site.

This sequence belongs to the glycosyltransferase 8 family. Glycogenin subfamily. It depends on Mn(2+) as a cofactor.

The protein resides in the golgi apparatus membrane. In terms of biological role, may be involved in the substitutions of the xylan backbone in stem glucuronoxylan. The protein is Putative UDP-glucuronate:xylan alpha-glucuronosyltransferase 5 (GUX5) of Arabidopsis thaliana (Mouse-ear cress).